Here is a 454-residue protein sequence, read N- to C-terminus: uncharacterized protein (454 aa).

A disordered region spans residues 1–25; that stretch reads MHGPTSKAISRNVRSVKRPRRAPRP. A compositionally biased stretch (basic residues) spans 14 to 23; the sequence is RSVKRPRRAP.

Its subcellular location is the cytoplasm. It localises to the nucleus. This is an uncharacterized protein from Saccharomyces cerevisiae (strain ATCC 204508 / S288c) (Baker's yeast).